The primary structure comprises 127 residues: MTKKAIIPAGTTKPIAPFVPGSMADGVLYVSGTLPFDKDNNVVHVGDATAQTRHVLETIKSVVETAGGTMDDVTFNMIMIRDWADYAKVNEVYAEYFAGEKPARYCIQCGLVKPEALIEIASIAHIG.

The protein belongs to the RutC family.

The enzyme catalyses (Z)-3-aminoacrylate + H2O + H(+) = 3-oxopropanoate + NH4(+). Involved in pyrimidine catabolism. Catalyzes the deamination of 3-aminoacrylate to malonic semialdehyde, a reaction that can also occur spontaneously. RutC may facilitate the reaction and modulate the metabolic fitness, rather than catalyzing essential functions. The polypeptide is 3-aminoacrylate deaminase RutC (Pseudomonas savastanoi pv. phaseolicola (strain 1448A / Race 6) (Pseudomonas syringae pv. phaseolicola (strain 1448A / Race 6))).